A 201-amino-acid chain; its full sequence is Interferon-induced transmembrane protein 10 (201 aa).

Disordered regions lie at residues Met-1–Gln-23 and Ala-60–Ser-88. Residues Met-1–Tyr-127 lie on the Extracellular side of the membrane. Pro residues predominate over residues Ala-63–Ala-73. Residues Leu-128–Ala-148 form a helical membrane-spanning segment. 2 S-palmitoyl cysteine lipidation sites follow: Cys-140 and Cys-141. The Cytoplasmic portion of the chain corresponds to Tyr-149–Arg-173. Residues Leu-174–Leu-194 traverse the membrane as a helical segment. Topologically, residues Arg-195–Tyr-201 are extracellular.

Belongs to the CD225/Dispanin family.

The protein resides in the cell membrane. The sequence is that of Interferon-induced transmembrane protein 10 (Ifitm10) from Mus musculus (Mouse).